Consider the following 353-residue polypeptide: Inositol 3-kinase (353 aa).

Residues Ser-197, 247–250, and Asn-274 contribute to the ATP site; that span reads GAGD. Catalysis depends on Asp-250, which acts as the Proton acceptor.

Belongs to the carbohydrate kinase pfkB family.

The enzyme catalyses myo-inositol + ATP = 1D-myo-inositol 3-phosphate + ADP + H(+). Kinase that phosphorylates myo-inositol to produce multiple myo-inositol monophosphates. Participates in phytic acid biosynthesis in developing seeds. Phytic acid is the primary storage form of phosphorus in cereal grains and other plant seeds. The protein is Inositol 3-kinase of Arabidopsis thaliana (Mouse-ear cress).